Reading from the N-terminus, the 316-residue chain is MHPAILIHGPTASGKSALAIELARKLGGEVINADSMQVYSDLQVISARPTEEEMAGVPHHLFGYVDAGRRYSTGEWLESARSVLKRLQRQNKHAVIVGGTGLYLLALTQGLSDIPPVPEDIRAEVKAISESEGADGLRLRLAPHDPELAERLGTGDRQRLARAYEVWLATGRQLSEFQNERQPPVLKEGEWVGFALTPPRAALYKKIDRRFEGMLMQGAVAEARALVSRNLDPELPAMKALGMPSIAAFVRGEISAEEAAESAKRESRRYAKRQFTWIGRQFPFWPRIPSPEVSDRMRVIFALYREIDTADTEDYA.

9-16 (GPTASGKS) provides a ligand contact to ATP. Residue 11–16 (TASGKS) participates in substrate binding. Interaction with substrate tRNA stretches follow at residues 34-37 (DSMQ) and 158-162 (QRLAR).

This sequence belongs to the IPP transferase family. Monomer. Mg(2+) is required as a cofactor.

It catalyses the reaction adenosine(37) in tRNA + dimethylallyl diphosphate = N(6)-dimethylallyladenosine(37) in tRNA + diphosphate. Functionally, catalyzes the transfer of a dimethylallyl group onto the adenine at position 37 in tRNAs that read codons beginning with uridine, leading to the formation of N6-(dimethylallyl)adenosine (i(6)A). This chain is tRNA dimethylallyltransferase, found in Hyphomonas neptunium (strain ATCC 15444).